The chain runs to 412 residues: Poly-beta-1,6-N-acetyl-D-glucosamine synthase (412 aa).

Transmembrane regions (helical) follow at residues 6–26 (FLLF…IYFY), 298–318 (IISI…FITA), 332–352 (IFLL…TVAL), and 366–386 (LIFV…VVLV).

It belongs to the glycosyltransferase 2 family.

It localises to the cell membrane. In terms of biological role, N-acetylglucosaminyltransferase that catalyzes the polymerization of single monomer units of UDP-N-acetylglucosamine to produce the linear homomer poly-beta-1,6-N-acetyl-D-glucosamine (PNAG, also referred to as PIA), a biofilm adhesin polysaccharide. Requires IcaD for full activity. The chain is Poly-beta-1,6-N-acetyl-D-glucosamine synthase (icaA) from Staphylococcus aureus (strain NCTC 8325 / PS 47).